The sequence spans 161 residues: Cyclic pyranopterin monophosphate synthase (161 aa).

Residues 75-77 (LCH) and 113-114 (ME) contribute to the substrate site. D128 is an active-site residue.

This sequence belongs to the MoaC family. In terms of assembly, homohexamer; trimer of dimers.

It catalyses the reaction (8S)-3',8-cyclo-7,8-dihydroguanosine 5'-triphosphate = cyclic pyranopterin phosphate + diphosphate. It functions in the pathway cofactor biosynthesis; molybdopterin biosynthesis. In terms of biological role, catalyzes the conversion of (8S)-3',8-cyclo-7,8-dihydroguanosine 5'-triphosphate to cyclic pyranopterin monophosphate (cPMP). This chain is Cyclic pyranopterin monophosphate synthase, found in Cupriavidus pinatubonensis (strain JMP 134 / LMG 1197) (Cupriavidus necator (strain JMP 134)).